We begin with the raw amino-acid sequence, 835 residues long: Adhesion G protein-coupled receptor E5 (835 aa).

The first 20 residues, 1–20, serve as a signal peptide directing secretion; it reads MGGRVFLAFCVWLTLPGAET. Residues 21–552 lie on the Extracellular side of the membrane; it reads QDSRGCARWC…EDWKLTLITR (532 aa). The 42-residue stretch at 22 to 63 folds into the EGF-like 1 domain; that stretch reads DSRGCARWCPQNSSCVNATACRCNPGFSSFSEIITTPTETCD. Cystine bridges form between Cys26–Cys36, Cys30–Cys42, Cys44–Cys62, Cys68–Cys82, Cys76–Cys91, Cys93–Cys114, Cys120–Cys133, Cys127–Cys142, Cys144–Cys158, Cys164–Cys177, Cys171–Cys186, Cys188–Cys207, Cys213–Cys226, Cys220–Cys235, and Cys237–Cys256. Residues Asn33 and Asn38 are each glycosylated (N-linked (GlcNAc...) asparagine). The 52-residue stretch at 64–115 folds into the EGF-like 2; calcium-binding domain; sequence DINECATPSKVSCGKFSDCWNTEGSYDCVCSPGYEPVSGAKTFKNESENTCQ. N-linked (GlcNAc...) asparagine glycosylation occurs at Asn108. The 44-residue stretch at 116-159 folds into the EGF-like 3; calcium-binding domain; it reads DVDECQQNPRLCKSYGTCVNTLGSYTCQCLPGFKFIPEDPKVCT. One can recognise an EGF-like 4; calcium-binding domain in the interval 160-208; it reads DVNECTSGQNPCHSSTHCLNNVGSYQCRCRPGWQPIPGSPNGPNNTVCE. The N-linked (GlcNAc...) asparagine glycan is linked to Asn203. The EGF-like 5; calcium-binding domain occupies 209–257; it reads DVDECSSGQHQCDSSTVCFNTVGSYSCRCRPGWKPRHGIPNNQKDTVCE. Positions 349-543 constitute a GAIN-B domain; the sequence is PFTYISPSNT…AILMAHYDVE (195 aa). N-linked (GlcNAc...) asparagine glycans are attached at residues Asn371, Asn406, Asn413, Asn453, and Asn520. Cystine bridges form between Cys495/Cys525 and Cys513/Cys527. Residues 495–543 form a GPS region; sequence CAFWKSDSDRGGHWATEGCQVLGSKNGSTTCQCSHLSSFAILMAHYDVE. Residues 553-572 traverse the membrane as a helical segment; it reads VGLALSLFCLLLCILTFLLV. The Cytoplasmic segment spans residues 573-581; it reads RPIQGSRTT. Residues 582 to 601 traverse the membrane as a helical segment; sequence IHLHLCICLFVGSTIFLAGI. Topologically, residues 602 to 620 are extracellular; it reads ENEGGQVGLRCRLVAGLLH. Residues 621-642 form a helical membrane-spanning segment; that stretch reads YCFLAAFCWMSLEGLELYFLVV. Over 643 to 653 the chain is Cytoplasmic; it reads RVFQGQGLSTR. A helical membrane pass occupies residues 654 to 674; sequence WLCLIGYGVPLLIVGVSAAIY. The Extracellular segment spans residues 675–691; that stretch reads SKGYGRPRYCWLDFEQG. Residues 692–712 traverse the membrane as a helical segment; the sequence is FLWSFLGPVTFIILCNAVIFV. Residues 713–739 lie on the Cytoplasmic side of the membrane; sequence TTVWKLTQKFSEINPDMKKLKKARALT. The chain crosses the membrane as a helical span at residues 740–760; that stretch reads ITAIAQLFLLGCTWVFGLFIF. Topologically, residues 761 to 766 are extracellular; that stretch reads DDRSLV. A helical membrane pass occupies residues 767–789; the sequence is LTYVFTILNCLQGAFLYLLHCLL. At 790 to 835 the chain is on the cytoplasmic side; it reads NKKVREEYRKWACLVAGGSKYSEFTSTTSGTGHNQTRALRASESGI. A compositionally biased stretch (polar residues) spans 814 to 826; sequence TSTTSGTGHNQTR. Residues 814-835 are disordered; the sequence is TSTTSGTGHNQTRALRASESGI. Ser815 carries the post-translational modification Phosphoserine. Thr816 is subject to Phosphothreonine. A Phosphoserine modification is found at Ser818. Residue Thr825 is modified to Phosphothreonine. Phosphoserine is present on residues Ser831 and Ser833.

Belongs to the G-protein coupled receptor 2 family. LN-TM7 subfamily. In terms of assembly, forms a heterodimer, consisting of a large extracellular region (alpha subunit) non-covalently linked to a seven-transmembrane moiety (beta subunit). Interacts with complement decay-accelerating factor (DAF). The largest isoform (isoform 1) interacts with chondroitin sulfate. Proteolytically cleaved into 2 subunits, an extracellular alpha subunit and a seven-transmembrane subunit. In terms of tissue distribution, broadly expressed, found on most hematopoietic cells, including activated lymphocytes, monocytes, macrophages, dendritic cells, and granulocytes. Expressed also abundantly by smooth muscle cells. Expressed in thyroid, colorectal, gastric, esophageal and pancreatic carcinomas too. Expression are increased under inflammatory conditions in the CNS of multiple sclerosis and in synovial tissue of patients with rheumatoid arthritis. Increased expression of CD97 in the synovium is accompanied by detectable levels of soluble CD97 in the synovial fluid.

Its subcellular location is the cell membrane. It is found in the secreted. The protein localises to the extracellular space. Receptor potentially involved in both adhesion and signaling processes early after leukocyte activation. Plays an essential role in leukocyte migration. The polypeptide is Adhesion G protein-coupled receptor E5 (Homo sapiens (Human)).